A 660-amino-acid polypeptide reads, in one-letter code: MKAVIFAYHDMGCQGVQAVLDAGYEIAAIFTHADNPAENTFFGSVSRLAAGLGIPVYAPDNVNHPIWVDRIAELAPDIIFSFYYRNLLSEEILHLAPAGAFNLHGSLLPAYRGRAPLNWVLVNGESETGVTLHRMVKRADAGEIVASQRVAIAQDDVALTLHHKLCQAARQLLNSILPTMKCGNIPSVPQRESDATYYGRRRPEDGLIDWHKPVSTVHNLVRAVAAPWPGAFSYNGSQKFTIWSSRICPDAQGALPGSVISVSPLRVACADGALEIITGQAGDGITVQGSQLAQTLGLVAGACLNRPPATSGKRRIRVLILGVNGFIGNHLTERLLDEENYEVYGMDIGSNAISRFLLHPRFHFVEGDISIHSEWIEYHVKKCDVVLPLVAIATPIEYTRNPLRVFELDFEENLRIIRYCVKYRKRVVFPSTSEVYGMCTDASFDEDKSNLIVGPVNKPRWIYSVSKQLLDRVIWAYGEKEGLRFTLFRPFNWMGPRLDSLNAARIGSSRAITQLILNLVEGTPIKLIDGGQQKRCFTDIRDGIEALFRIIVNEGDRCDGKIINIGNPDNEASIQELATLLLDSFDKHPLRCHFPPFAGFQVVESRSYYGKGYQDVAHRKPSIDNARRCLDWEPSIAMRDTVEETLDFFLRSVDIAERAS.

The interval 1–304 (MKAVIFAYHD…TLGLVAGACL (304 aa)) is formyltransferase ArnAFT. Catalysis depends on histidine 104, which acts as the Proton donor; for formyltransferase activity. Residues arginine 114 and 136-140 (VKRAD) contribute to the (6R)-10-formyltetrahydrofolate site. Residues 314–660 (RRIRVLILGV…RSVDIAERAS (347 aa)) are dehydrogenase ArnADH. NAD(+) is bound by residues aspartate 347 and 368–369 (DI). Residues alanine 393, tyrosine 398, and 432 to 433 (TS) each bind UDP-alpha-D-glucuronate. Residue glutamate 434 is the Proton acceptor; for decarboxylase activity of the active site. UDP-alpha-D-glucuronate contacts are provided by residues arginine 460, asparagine 492, 526-535 (KLIDGGQQKR), and tyrosine 613. The Proton donor; for decarboxylase activity role is filled by arginine 619.

In the N-terminal section; belongs to the Fmt family. UDP-L-Ara4N formyltransferase subfamily. It in the C-terminal section; belongs to the NAD(P)-dependent epimerase/dehydratase family. UDP-glucuronic acid decarboxylase subfamily. Homohexamer, formed by a dimer of trimers.

The enzyme catalyses UDP-alpha-D-glucuronate + NAD(+) = UDP-beta-L-threo-pentopyranos-4-ulose + CO2 + NADH. The catalysed reaction is UDP-4-amino-4-deoxy-beta-L-arabinose + (6R)-10-formyltetrahydrofolate = UDP-4-deoxy-4-formamido-beta-L-arabinose + (6S)-5,6,7,8-tetrahydrofolate + H(+). The protein operates within nucleotide-sugar biosynthesis; UDP-4-deoxy-4-formamido-beta-L-arabinose biosynthesis; UDP-4-deoxy-4-formamido-beta-L-arabinose from UDP-alpha-D-glucuronate: step 1/3. Its pathway is nucleotide-sugar biosynthesis; UDP-4-deoxy-4-formamido-beta-L-arabinose biosynthesis; UDP-4-deoxy-4-formamido-beta-L-arabinose from UDP-alpha-D-glucuronate: step 3/3. It functions in the pathway bacterial outer membrane biogenesis; lipopolysaccharide biosynthesis. Bifunctional enzyme that catalyzes the oxidative decarboxylation of UDP-glucuronic acid (UDP-GlcUA) to UDP-4-keto-arabinose (UDP-Ara4O) and the addition of a formyl group to UDP-4-amino-4-deoxy-L-arabinose (UDP-L-Ara4N) to form UDP-L-4-formamido-arabinose (UDP-L-Ara4FN). The modified arabinose is attached to lipid A and is required for resistance to polymyxin and cationic antimicrobial peptides. This Salmonella paratyphi A (strain ATCC 9150 / SARB42) protein is Bifunctional polymyxin resistance protein ArnA.